The primary structure comprises 871 residues: Espin (871 aa).

9 ANK repeats span residues 1-31 (MALE…GPSL), 35-66 (LDAL…AVSR), 69-99 (NGAT…RVQE), 103-132 (SGAT…ANSA), 137-167 (TGAL…GVNA), 171-201 (NGAT…DPHL), 205-235 (DGMT…SFSE), 239-268 (DGAT…EISQ), and 271-300 (WGGT…GLDV). Phosphoserine occurs at positions 338 and 342. Disordered regions lie at residues 349–400 (QLDS…RGIP), 416–469 (PEKS…VGLH), 493–750 (KVEL…APGV), and 819–850 (EREQ…TLGY). Positions 352-365 (SGMSSPNTTMSVQP) are enriched in polar residues. A compositionally biased stretch (low complexity) spans 377–395 (FSNYDSCSSSHSSSKGQRS). Residues 428–465 (PSPPPPPPPPPPSFPPPPPPTGTQPPPPPPGYPAPNPP) are compositionally biased toward pro residues. A phosphoserine mark is found at Ser517, Ser524, and Ser556. Over residues 522–548 (QDSELLHRQELLRHSTGLRRQDSDRKQ) the composition is skewed to basic and acidic residues. Pro residues predominate over residues 606–629 (LPPPPPPPPLPEALSSPPPAPPLP). Polar residues-rich tracts occupy residues 659-670 (KSFNMMSPTGDN) and 685-707 (PTPQ…SQPE). Ser665 is subject to Phosphoserine. The WH2 domain maps to 669 to 686 (DNSELLAEIKAGKSLKPT). Residues Ser704, Ser708, and Ser714 each carry the phosphoserine modification. Residues 772 to 848 (KRQVMVRKLQ…KEQSEKLRTL (77 aa)) are a coiled coil.

As to quaternary structure, monomer. Binds F-actin in a Ca(2+)-resistant fashion. Interacts (via N-terminus) with BAIAP2 (via SH3-domain). Interacts with PFN2. Interacts with MYO3A (via C-terminus). Interacts with MYO3B (via C-terminus). As to expression, expressed at high concentration in the microvillar parallel actin bundle (PAB) of hair cells stereocilia in the cochlea and vestibular system. Detected also at high levels of a number of other sensory cell types, including taste receptor cells, solitary chemoreceptor cells, vomeronasal sensory neurons and Merkel cells. Isoforms 2, 3, 4 and 5 are expressed in Purkinje cells dendritic spines. Expressed in utricle hair bundles (at protein level).

Its subcellular location is the cytoplasm. The protein localises to the cytoskeleton. The protein resides in the cell projection. It is found in the stereocilium. It localises to the microvillus. Its subcellular location is the cell junction. The protein localises to the dendritic spine. In terms of biological role, multifunctional actin-bundling protein. Plays a major role in regulating the organization, dimension, dynamics and signaling capacities of the actin filament-rich microvilli in the mechanosensory and chemosensory cells. Required for the assembly and stabilization of the stereociliary parallel actin bundles. Plays a crucial role in the formation and maintenance of inner ear hair cell stereocilia. Involved in the elongation of actin in stereocilia. In extrastriolar hair cells, required for targeting MYO3B to stereocilia tips, and for regulation of stereocilia diameter and staircase formation. In Mus musculus (Mouse), this protein is Espin (Espn).